The sequence spans 548 residues: T-complex protein 1 subunit theta (548 aa).

Ala-2 carries the N-acetylalanine modification. Ser-23 is subject to Phosphoserine. Position 30 is a phosphotyrosine (Tyr-30). Residues Tyr-47 and Gly-48 each contribute to the ADP site. Mg(2+) is bound at residue Asp-99. Residues Gly-100, Thr-101, Asn-102, and Phe-103 each contribute to the ADP site. ATP contacts are provided by Gly-100, Thr-101, and Asn-102. At Ser-162 the chain carries Phosphoserine. Residues Met-169, Ser-170, and Lys-171 each coordinate ADP. The ATP site is built by Ser-170 and Lys-171. Ser-213 is subject to Phosphoserine. Glycyl lysine isopeptide (Lys-Gly) (interchain with G-Cter in SUMO2) cross-links involve residues Lys-224, Lys-254, and Lys-260. Phosphoserine is present on residues Ser-269 and Ser-317. 2 positions are modified to N6-acetyllysine: Lys-318 and Lys-400. Residue Gly-412 participates in ADP binding. Gly-412 is a binding site for ATP. Residue Lys-459 forms a Glycyl lysine isopeptide (Lys-Gly) (interchain with G-Cter in SUMO1) linkage. At Lys-466 the chain carries N6-acetyllysine. Residue Asp-499 participates in ADP binding. ATP is bound by residues Asp-499 and Lys-504. Tyr-505 carries the phosphotyrosine modification. The interval Pro-529–Asp-548 is disordered. Lys-534 participates in a covalent cross-link: Glycyl lysine isopeptide (Lys-Gly) (interchain with G-Cter in SUMO2). Ser-537 bears the Phosphoserine mark. Residue Lys-539 forms a Glycyl lysine isopeptide (Lys-Gly) (interchain with G-Cter in SUMO2) linkage.

The protein belongs to the TCP-1 chaperonin family. In terms of assembly, component of the chaperonin-containing T-complex (TRiC), a hexadecamer composed of two identical back-to-back stacked rings enclosing a protein folding chamber. Each ring is made up of eight different subunits: TCP1/CCT1, CCT2, CCT3, CCT4, CCT5, CCT6A/CCT6, CCT7, CCT8. Interacts with PACRG. Interacts with DNAAF4. Interacts with synaptic plasticity regulator PANTS.

It is found in the cytoplasm. The protein resides in the cytoskeleton. Its subcellular location is the microtubule organizing center. It localises to the centrosome. The protein localises to the cilium basal body. The enzyme catalyses ATP + H2O = ADP + phosphate + H(+). In terms of biological role, component of the chaperonin-containing T-complex (TRiC), a molecular chaperone complex that assists the folding of actin, tubulin and other proteins upon ATP hydrolysis. The TRiC complex mediates the folding of WRAP53/TCAB1, thereby regulating telomere maintenance. As part of the TRiC complex may play a role in the assembly of BBSome, a complex involved in ciliogenesis regulating transports vesicles to the cilia. The polypeptide is T-complex protein 1 subunit theta (CCT8) (Macaca fascicularis (Crab-eating macaque)).